The following is a 309-amino-acid chain: Spermatid maturation protein 1 (309 aa).

The helical transmembrane segment at 29-49 (VLLLLGLIICINISINIVTLL) threads the bilayer. Residues 209–231 (PPPPSPEAPSHKNGGEGAVPEAE) are disordered. Residues 259-285 (RIVYDARDMRRRLRELTREVEALSGCY) adopt a coiled-coil conformation.

The protein resides in the membrane. It localises to the cytoplasm. Functionally, required for proper cytoplasm removal during spermatogenesis. The chain is Spermatid maturation protein 1 (SPEM1) from Homo sapiens (Human).